Here is a 240-residue protein sequence, read N- to C-terminus: Phosphoribosylaminoimidazole-succinocarboxamide synthase (240 aa).

Belongs to the SAICAR synthetase family.

It carries out the reaction 5-amino-1-(5-phospho-D-ribosyl)imidazole-4-carboxylate + L-aspartate + ATP = (2S)-2-[5-amino-1-(5-phospho-beta-D-ribosyl)imidazole-4-carboxamido]succinate + ADP + phosphate + 2 H(+). Its pathway is purine metabolism; IMP biosynthesis via de novo pathway; 5-amino-1-(5-phospho-D-ribosyl)imidazole-4-carboxamide from 5-amino-1-(5-phospho-D-ribosyl)imidazole-4-carboxylate: step 1/2. In Wolbachia sp. subsp. Brugia malayi (strain TRS), this protein is Phosphoribosylaminoimidazole-succinocarboxamide synthase.